A 121-amino-acid polypeptide reads, in one-letter code: Small ribosomal subunit protein uS13 (121 aa).

The interval 97–121 (VRGQRTRTNARTRRGARKTVAGKKK) is disordered. Residues 100–121 (QRTRTNARTRRGARKTVAGKKK) show a composition bias toward basic residues.

Belongs to the universal ribosomal protein uS13 family. Part of the 30S ribosomal subunit. Forms a loose heterodimer with protein S19. Forms two bridges to the 50S subunit in the 70S ribosome.

In terms of biological role, located at the top of the head of the 30S subunit, it contacts several helices of the 16S rRNA. In the 70S ribosome it contacts the 23S rRNA (bridge B1a) and protein L5 of the 50S subunit (bridge B1b), connecting the 2 subunits; these bridges are implicated in subunit movement. Contacts the tRNAs in the A and P-sites. The chain is Small ribosomal subunit protein uS13 from Prochlorococcus marinus (strain MIT 9313).